We begin with the raw amino-acid sequence, 379 residues long: Protein-glutamate methylesterase/protein-glutamine glutaminase (379 aa).

The Response regulatory domain occupies 4 to 121; it reads KVLVVDDSSF…AKNSDEAGSL (118 aa). D55 carries the post-translational modification 4-aspartylphosphate. Residues 185–379 form the CheB-type methylesterase domain; the sequence is SGKEYKLLAI…ASMVKEISRG (195 aa). Active-site residues include S197, H224, and D321.

This sequence belongs to the CheB family. Phosphorylated by CheA. Phosphorylation of the N-terminal regulatory domain activates the methylesterase activity.

It localises to the cytoplasm. The enzyme catalyses [protein]-L-glutamate 5-O-methyl ester + H2O = L-glutamyl-[protein] + methanol + H(+). It catalyses the reaction L-glutaminyl-[protein] + H2O = L-glutamyl-[protein] + NH4(+). Its function is as follows. Involved in chemotaxis. Part of a chemotaxis signal transduction system that modulates chemotaxis in response to various stimuli. Catalyzes the demethylation of specific methylglutamate residues introduced into the chemoreceptors (methyl-accepting chemotaxis proteins or MCP) by CheR. Also mediates the irreversible deamidation of specific glutamine residues to glutamic acid. The polypeptide is Protein-glutamate methylesterase/protein-glutamine glutaminase (Colwellia psychrerythraea (strain 34H / ATCC BAA-681) (Vibrio psychroerythus)).